A 163-amino-acid polypeptide reads, in one-letter code: Lipoprotein signal peptidase (163 aa).

The next 4 membrane-spanning stretches (helical) occupy residues 9–29, 42–62, 67–87, and 93–113; these read AWPW…SKYL, ILPF…SFLG, WQII…ILWL, and SEIM…GNFI. Active-site residues include aspartate 123 and aspartate 141. A helical transmembrane segment spans residues 137-157; that stretch reads FNVADSAICVGVFLLIVHMLL.

The protein belongs to the peptidase A8 family.

The protein localises to the cell inner membrane. The catalysed reaction is Release of signal peptides from bacterial membrane prolipoproteins. Hydrolyzes -Xaa-Yaa-Zaa-|-(S,diacylglyceryl)Cys-, in which Xaa is hydrophobic (preferably Leu), and Yaa (Ala or Ser) and Zaa (Gly or Ala) have small, neutral side chains.. Its pathway is protein modification; lipoprotein biosynthesis (signal peptide cleavage). Its function is as follows. This protein specifically catalyzes the removal of signal peptides from prolipoproteins. The protein is Lipoprotein signal peptidase of Coxiella burnetii (strain RSA 331 / Henzerling II).